We begin with the raw amino-acid sequence, 419 residues long: UDP-N-acetylglucosamine 1-carboxyvinyltransferase (419 aa).

22–23 is a binding site for phosphoenolpyruvate; that stretch reads KN. Arg93 provides a ligand contact to UDP-N-acetyl-alpha-D-glucosamine. Cys117 acts as the Proton donor in catalysis. 2-(S-cysteinyl)pyruvic acid O-phosphothioketal is present on Cys117. Positions 306 and 328 each coordinate UDP-N-acetyl-alpha-D-glucosamine.

This sequence belongs to the EPSP synthase family. MurA subfamily.

The protein resides in the cytoplasm. It carries out the reaction phosphoenolpyruvate + UDP-N-acetyl-alpha-D-glucosamine = UDP-N-acetyl-3-O-(1-carboxyvinyl)-alpha-D-glucosamine + phosphate. It functions in the pathway cell wall biogenesis; peptidoglycan biosynthesis. Functionally, cell wall formation. Adds enolpyruvyl to UDP-N-acetylglucosamine. In Vesicomyosocius okutanii subsp. Calyptogena okutanii (strain HA), this protein is UDP-N-acetylglucosamine 1-carboxyvinyltransferase.